The chain runs to 406 residues: Heparan sulfate glucosamine 3-O-sulfotransferase 3A1 (406 aa).

At 1–24 (MAPPGPASALSTSAEPLSRSIFRK) the chain is on the cytoplasmic side. Residues 25-43 (FLLMLCSLLTSLYVFYCLA) traverse the membrane as a helical; Signal-anchor for type II membrane protein segment. Topologically, residues 44 to 406 (ERCQTLSGPV…MTGHDFGWDG (363 aa)) are lumenal. Residues 92 to 102 (QLPQWRRRRPP) show a composition bias toward basic residues. The interval 92–134 (QLPQWRRRRPPAPRDDGEEAAWEEESPGLSGGPGGSGAGSTVA) is disordered. Over residues 107 to 117 (DGEEAAWEEES) the composition is skewed to acidic residues. Over residues 120–129 (LSGGPGGSGA) the composition is skewed to gly residues. A 3'-phosphoadenylyl sulfate-binding site is contributed by 162-166 (KGGTR). Residues R166, 184–190 (EPHFFDR), and 215–218 (KTPS) contribute to the substrate site. Residues R243 and S251 each coordinate 3'-phosphoadenylyl sulfate. 255 to 259 (QTLSK) contributes to the substrate binding site. N273 carries N-linked (GlcNAc...) asparagine glycosylation. 283–284 (WS) is a substrate binding site. Residue N344 is glycosylated (N-linked (GlcNAc...) asparagine). C351 and C363 form a disulfide bridge. Residue 367–370 (TKGR) coordinates substrate. 368-372 (KGRTH) provides a ligand contact to 3'-phosphoadenylyl sulfate.

Belongs to the sulfotransferase 1 family. Ubiquitous. Most abundant in heart and placenta, followed by liver and kidney.

Its subcellular location is the golgi apparatus membrane. It catalyses the reaction alpha-D-glucosaminyl-[heparan sulfate](n) + 3'-phosphoadenylyl sulfate = 3-sulfo-alpha-D-glucosaminyl-[heparan sulfate](n) + adenosine 3',5'-bisphosphate + H(+). Functionally, sulfotransferase that utilizes 3'-phospho-5'-adenylyl sulfate (PAPS) to catalyze the transfer of a sulfo group to an N-unsubstituted glucosamine linked to a 2-O-sulfo iduronic acid unit on heparan sulfate. Catalyzes the O-sulfation of glucosamine in IdoUA2S-GlcNS and also in IdoUA2S-GlcNH2. The substrate-specific O-sulfation generates an enzyme-modified heparan sulfate which acts as a binding receptor to Herpes simplex virus-1 (HSV-1) and permits its entry. Unlike HS3ST1/3-OST-1, does not convert non-anticoagulant heparan sulfate to anticoagulant heparan sulfate. This Homo sapiens (Human) protein is Heparan sulfate glucosamine 3-O-sulfotransferase 3A1 (HS3ST3A1).